Here is a 195-residue protein sequence, read N- to C-terminus: Adenylate kinase (195 aa).

10-15 (GSGKGT) provides a ligand contact to ATP. An NMP region spans residues 30–59 (STGDILRAERAAGTLLGQQAQSYMDRGELV). AMP is bound by residues threonine 31, arginine 36, 57-59 (ELV), 85-88 (GFPR), and glutamine 92. The LID stretch occupies residues 126-140 (NRAKQAVNGQQRSDD). ATP is bound at residue arginine 127. Positions 137 and 148 each coordinate AMP. Arginine 176 lines the ATP pocket.

Belongs to the adenylate kinase family. As to quaternary structure, monomer.

It localises to the cytoplasm. It carries out the reaction AMP + ATP = 2 ADP. It participates in purine metabolism; AMP biosynthesis via salvage pathway; AMP from ADP: step 1/1. Functionally, catalyzes the reversible transfer of the terminal phosphate group between ATP and AMP. Plays an important role in cellular energy homeostasis and in adenine nucleotide metabolism. This chain is Adenylate kinase, found in Thermosynechococcus vestitus (strain NIES-2133 / IAM M-273 / BP-1).